A 443-amino-acid chain; its full sequence is Autophagy-related protein 13 homolog (443 aa).

Disordered stretches follow at residues 232–283 (AKKR…EEDH) and 308–333 (ANGT…KEPT). Over residues 240–253 (SVESATSAGSSTSR) the composition is skewed to polar residues. Residues 268 to 283 (EDSRHSDVQNSYEEDH) are compositionally biased toward basic and acidic residues. Positions 308–325 (ANGTKKNSSSTCLNSPKS) are enriched in polar residues.

Belongs to the ATG13 family. Metazoan subfamily. Interacts with unc-51 (via C-terminus). Interacts with lgg-1; the interaction is direct.

The protein resides in the cytoplasm. The protein localises to the cytosol. Its subcellular location is the preautophagosomal structure. It localises to the perikaryon. It is found in the cell projection. The protein resides in the axon. Functionally, component of the unc-51/atg-13 complex required for autophagosome formation. Required for the degradation of germ cell specific P-granule components such as sepa-1 by autophagy in somatic cells. This ensures exclusive localization of the P-granules in germ cells. May function downstream of the let-363 (Tor) signaling pathway to mediate sepa-1 degradation. Plays a role in survival during limited food availability. The chain is Autophagy-related protein 13 homolog from Caenorhabditis elegans.